A 162-amino-acid polypeptide reads, in one-letter code: Novel acetylcholine receptor chaperone (162 aa).

The Cytoplasmic portion of the chain corresponds to 1–5; sequence MASPR. Residues 6–26 form a helical membrane-spanning segment; that stretch reads TVTIVALSVTLGLFFVFMGTI. The Lumenal segment spans residues 27–61; that stretch reads KLTPRLSKDAYSEMKRAYKSYVKALPALKKIGISS. The chain crosses the membrane as a helical span at residues 62–82; that stretch reads VFLRKAIGSLELACGIVLTLV. Topologically, residues 83-88 are cytoplasmic; that stretch reads PGRPKD. Residues 89–109 form a helical membrane-spanning segment; sequence VANFILLLLVLIVLFFHQLVG. Over 110–114 the chain is Lumenal; that stretch reads DPLKR. The chain crosses the membrane as a helical span at residues 115-131; that stretch reads YAHALVFGILLTCRLLV. The Cytoplasmic segment spans residues 132–162; sequence SRQPEEEFPEKKLSRGNNGAHSREPIKMKVS. Positions 141-162 are disordered; sequence EKKLSRGNNGAHSREPIKMKVS. A compositionally biased stretch (basic and acidic residues) spans 152 to 162; the sequence is HSREPIKMKVS.

Belongs to the DoxX family.

The protein resides in the peroxisome membrane. The protein localises to the cytoplasmic vesicle. Its subcellular location is the endoplasmic reticulum membrane. In terms of biological role, molecular chaperone which mediates the proper assembly and functional expression of the nicotinic acetylcholine receptors (nAChRs) throughout the brain. Essential for the proper folding, assembly, function and surface trafficking of alpha-7 (CHRNA7), alpha-4-beta-2, alpha-3-beta-2 and alpha-3-beta-4 receptors. In Xenopus tropicalis (Western clawed frog), this protein is Novel acetylcholine receptor chaperone (tmem35a).